A 72-amino-acid chain; its full sequence is Rubredoxin in uptake hydrogenase operon (72 aa).

The region spanning 19–70 (DAVLECKICWHRYDPAVGDEVWQILAGTPFAALPAHWRCPQCDGDREQFMVV) is the Rubredoxin-like domain. The Fe cation site is built by C24, C27, C57, and C60.

Belongs to the rubredoxin family. Fe(3+) is required as a cofactor.

In terms of biological role, could be an electron transport intermediate in hydrogen oxidation. In Azotobacter chroococcum mcd 1, this protein is Rubredoxin in uptake hydrogenase operon (hupR).